The chain runs to 340 residues: Phosphoribosylformylglycinamidine cyclo-ligase (340 aa).

This sequence belongs to the AIR synthase family.

Its subcellular location is the cytoplasm. The catalysed reaction is 2-formamido-N(1)-(5-O-phospho-beta-D-ribosyl)acetamidine + ATP = 5-amino-1-(5-phospho-beta-D-ribosyl)imidazole + ADP + phosphate + H(+). The protein operates within purine metabolism; IMP biosynthesis via de novo pathway; 5-amino-1-(5-phospho-D-ribosyl)imidazole from N(2)-formyl-N(1)-(5-phospho-D-ribosyl)glycinamide: step 2/2. This Streptococcus pyogenes serotype M12 (strain MGAS2096) protein is Phosphoribosylformylglycinamidine cyclo-ligase.